The primary structure comprises 497 residues: Carboxylesterase (497 aa).

The active-site Acyl-ester intermediate is serine 185. Catalysis depends on charge relay system residues glutamate 319 and histidine 415.

Belongs to the type-B carboxylesterase/lipase family.

The protein resides in the secreted. The enzyme catalyses a carboxylic ester + H2O = an alcohol + a carboxylate + H(+). The protein is Carboxylesterase of Thermobifida fusca (Thermomonospora fusca).